The primary structure comprises 483 residues: HSPB1-associated protein 1 (483 aa).

Positions 1–26 (MAAGCEGIAPPTLGERTVGEEGEPVK) are disordered. The interval 88-208 (ETECSYVDAT…EDTPFLYPTR (121 aa)) is interaction with HSPB1. The region spanning 124–288 (WAYADYKYFV…HLARVEEAIT (165 aa)) is the JmjC domain. Positions 388–416 (LIPVTPASEERGGALEGDSEESVSSNGGH) are disordered.

As to quaternary structure, interacts with CRYAB and HSPB1.

It localises to the cytoplasm. Its function is as follows. May play a role in cellular stress response. The protein is HSPB1-associated protein 1 (Hspbap1) of Mus musculus (Mouse).